The sequence spans 337 residues: Ferredoxin--NADP reductase (337 aa).

FAD is bound by residues Glu42, Gln50, Tyr55, Val97, Phe130, Asp292, and Thr333.

The protein belongs to the ferredoxin--NADP reductase type 2 family. Homodimer. FAD serves as cofactor.

It catalyses the reaction 2 reduced [2Fe-2S]-[ferredoxin] + NADP(+) + H(+) = 2 oxidized [2Fe-2S]-[ferredoxin] + NADPH. This is Ferredoxin--NADP reductase from Streptococcus mutans serotype c (strain ATCC 700610 / UA159).